The following is a 199-amino-acid chain: Probable V-type proton ATPase 20 kDa proteolipid subunit (199 aa).

Over 1–3 (MSL) the chain is Vacuolar. The helical transmembrane segment at 4–24 (FSTSLWTTTVMSIIVGLYMLF) threads the bilayer. Over 25–46 (HNSGESFDFGSFLLDTSPYTWG) the chain is Cytoplasmic. A helical membrane pass occupies residues 47–67 (LLGIASCVAFGIIGAAWGIFI). Residues 68–86 (CGTSILGGAVKAPRIKTKN) lie on the Vacuolar side of the membrane. Residues 87–107 (LISIIFCEVVAIYSLIIAIVF) form a helical membrane-spanning segment. Over 108–130 (SAKINDINPAGFYTKSHYYTGFA) the chain is Cytoplasmic. A helical transmembrane segment spans residues 131–151 (LFWGGITVGLCNLICGVCVGI). Residues 152–170 (TGSSAALADAQDASLFVKV) lie on the Vacuolar side of the membrane. A helical membrane pass occupies residues 171–191 (LVVEIFGSVLGLFGLIVGLLI). Residues 192-199 (GGKASDFS) lie on the Cytoplasmic side of the membrane.

This sequence belongs to the V-ATPase proteolipid subunit family. As to quaternary structure, V-ATPase is a heteromultimeric enzyme composed of a peripheral catalytic V1 complex (components A to H) attached to an integral membrane V0 proton pore complex (components: a, c, c', c'', d, e, f and VOA1). The decameric c-ring forms the proton-conducting pore, and is composed of eight proteolipid subunits c, one subunit c' and one subunit c''.

The protein resides in the vacuole membrane. In terms of biological role, proton-conducting pore forming subunit of the V0 complex of vacuolar(H+)-ATPase (V-ATPase), a multisubunit enzyme composed of a peripheral complex (V1) that hydrolyzes ATP and a membrane integral complex (V0) that translocates protons. V-ATPase is responsible for acidifying and maintaining the pH of intracellular compartments. This Schizosaccharomyces pombe (strain 972 / ATCC 24843) (Fission yeast) protein is Probable V-type proton ATPase 20 kDa proteolipid subunit (vma16).